We begin with the raw amino-acid sequence, 120 residues long: UPF0715 membrane protein YwlA (120 aa).

Helical transmembrane passes span 3 to 23, 26 to 46, 63 to 83, and 95 to 115; these read YNYTVLLSAFTMSVLYSVIYI, FIIAALITMAFYFLFPYLIFA, LYLLYYLAAAFIANAIIFGML, and AFYLFAVLTALIYWIWDSVLL.

It belongs to the UPF0715 family.

The protein resides in the cell membrane. The polypeptide is UPF0715 membrane protein YwlA (ywlA) (Bacillus subtilis (strain 168)).